The primary structure comprises 365 residues: Spermidine-binding periplasmic protein SpuE (365 aa).

A signal peptide spans 1–24; it reads MQHSIGKTLLVAALATAIAGPVQA. The spermidine site is built by threonine 35, glutamate 181, aspartate 242, and asparagine 269.

The protein belongs to the bacterial solute-binding protein PotD/PotF family.

It is found in the periplasm. Functionally, spermidine-binding protein probably required for its uptake into cells. Binds spermidine with high affinity (KD=14.3 nM). Does not bind putrescine, cadaverine or spermine. Spermidine binding induces large inter-domain conformational changes. Implicated in induction of type 3 secretion systems (T3SS), which play a role in virulence. The sequence is that of Spermidine-binding periplasmic protein SpuE (spuE) from Pseudomonas aeruginosa (strain ATCC 15692 / DSM 22644 / CIP 104116 / JCM 14847 / LMG 12228 / 1C / PRS 101 / PAO1).